The primary structure comprises 158 residues: Ribosome maturation factor RimP (158 aa).

This sequence belongs to the RimP family.

The protein localises to the cytoplasm. Its function is as follows. Required for maturation of 30S ribosomal subunits. The polypeptide is Ribosome maturation factor RimP (Streptococcus suis (strain 98HAH33)).